Consider the following 297-residue polypeptide: uncharacterized protein (297 aa).

WD repeat units follow at residues 12–51, 54–93, 96–135, 140–177, 179–217, 222–261, and 265–297; these read KAKEPINVVKYNRTGKYVLAAGNERVVRLWNVKSGACIHE, GHGHEILDLDLVYDSTKFASCGGDKFIQVWDVNTGKVDRR, GHLAQINTIRYNEDSSILASGSFDSKVRLWDCRSNSFSPI, DAKDSVSSIDIAEHLIVTGSTDGTLRTYDIRKGTLSSD, FSHPITSVKTSKSASFSLISSLNSSIHLLDQETGKILKS, KNMEYRVRSSFNQSETIVFSGSEDGKVYLWDLENETQITS, and VGTPIVTDISCHPTMDDFIIATVHGDLFIYQYN.

Belongs to the WD repeat MORG1 family.

Its subcellular location is the cytoplasm. It localises to the nucleus. This is an uncharacterized protein from Schizosaccharomyces pombe (strain 972 / ATCC 24843) (Fission yeast).